The chain runs to 88 residues: MTEATQTARTLSGKVVSNKMDKSIVVLVERQVKHPLYGKYMKRSTKIHAHDESNQCNIGDTVTIQETRPVSKTKSWALVEVTERAAKV.

Belongs to the universal ribosomal protein uS17 family. In terms of assembly, part of the 30S ribosomal subunit.

Functionally, one of the primary rRNA binding proteins, it binds specifically to the 5'-end of 16S ribosomal RNA. In Marinobacter nauticus (strain ATCC 700491 / DSM 11845 / VT8) (Marinobacter aquaeolei), this protein is Small ribosomal subunit protein uS17.